Consider the following 222-residue polypeptide: MKFFIDTASLDEIKAANELGVLDGVTTNPSLIAKIVKDSTNFTYADFKAHIAKICEIVDGPVSAEVTTLKAGEMIAQGEELAAIHKNIVVKCPLTVDGLKAIKHFSSNGIKTNATLVFSPTQALLAAKAGADFVSPFVGRLDDISTSGMELVRQIVTIYDNYGYLTEVIVASVRNPLHVVESAMVGADIATIPYSVIKQLANHPLTDKGLEKFMEDAAVMKP.

Lysine 91 functions as the Schiff-base intermediate with substrate in the catalytic mechanism.

The protein belongs to the transaldolase family. Type 3B subfamily.

It localises to the cytoplasm. It carries out the reaction D-sedoheptulose 7-phosphate + D-glyceraldehyde 3-phosphate = D-erythrose 4-phosphate + beta-D-fructose 6-phosphate. It participates in carbohydrate degradation; pentose phosphate pathway; D-glyceraldehyde 3-phosphate and beta-D-fructose 6-phosphate from D-ribose 5-phosphate and D-xylulose 5-phosphate (non-oxidative stage): step 2/3. In terms of biological role, transaldolase is important for the balance of metabolites in the pentose-phosphate pathway. This is Probable transaldolase from Chlorobaculum tepidum (strain ATCC 49652 / DSM 12025 / NBRC 103806 / TLS) (Chlorobium tepidum).